A 248-amino-acid chain; its full sequence is Isopentenyl phosphate kinase (248 aa).

An ATP-binding site is contributed by 7-11 (KLGGS). G49 is a binding site for substrate. G50 serves as a coordination point for ATP. Substrate-binding residues include H54 and G152. Residues G209 and K213 each contribute to the ATP site.

It belongs to the isopentenyl phosphate kinase family. In terms of assembly, homodimer.

The enzyme catalyses isopentenyl phosphate + ATP = isopentenyl diphosphate + ADP. Catalyzes the phosphorylation of isopentenyl phosphate (IP) to isopentenyl diphosphate (IPP). Functions in an alternate mevalonate (MVA) pathway leading to IPP, a key precursor for the biosynthesis of isoprenoid compounds such as archaeal membrane lipids. The polypeptide is Isopentenyl phosphate kinase (Haloferax volcanii (strain ATCC 29605 / DSM 3757 / JCM 8879 / NBRC 14742 / NCIMB 2012 / VKM B-1768 / DS2) (Halobacterium volcanii)).